The sequence spans 260 residues: Acetylglutamate kinase (260 aa).

Substrate contacts are provided by residues 41 to 42 (GG), Arg63, and Asn156.

The protein belongs to the acetylglutamate kinase family. ArgB subfamily.

The protein resides in the cytoplasm. The enzyme catalyses N-acetyl-L-glutamate + ATP = N-acetyl-L-glutamyl 5-phosphate + ADP. It participates in amino-acid biosynthesis; L-arginine biosynthesis; N(2)-acetyl-L-ornithine from L-glutamate: step 2/4. In terms of biological role, catalyzes the ATP-dependent phosphorylation of N-acetyl-L-glutamate. The chain is Acetylglutamate kinase from Halalkalibacterium halodurans (strain ATCC BAA-125 / DSM 18197 / FERM 7344 / JCM 9153 / C-125) (Bacillus halodurans).